A 73-amino-acid polypeptide reads, in one-letter code: Translation initiation factor IF-1 (73 aa).

An S1-like domain is found at 1-72 (MSKKDVIELE…SRGRIVYRKK (72 aa)).

Belongs to the IF-1 family. As to quaternary structure, component of the 30S ribosomal translation pre-initiation complex which assembles on the 30S ribosome in the order IF-2 and IF-3, IF-1 and N-formylmethionyl-tRNA(fMet); mRNA recruitment can occur at any time during PIC assembly.

It is found in the cytoplasm. Functionally, one of the essential components for the initiation of protein synthesis. Stabilizes the binding of IF-2 and IF-3 on the 30S subunit to which N-formylmethionyl-tRNA(fMet) subsequently binds. Helps modulate mRNA selection, yielding the 30S pre-initiation complex (PIC). Upon addition of the 50S ribosomal subunit IF-1, IF-2 and IF-3 are released leaving the mature 70S translation initiation complex. The polypeptide is Translation initiation factor IF-1 (Fusobacterium nucleatum subsp. nucleatum (strain ATCC 25586 / DSM 15643 / BCRC 10681 / CIP 101130 / JCM 8532 / KCTC 2640 / LMG 13131 / VPI 4355)).